The following is an 86-amino-acid chain: Sulmotoxin 2 (86 aa).

The first 21 residues, M1–P21, serve as a signal peptide directing secretion. 5 disulfide bridges follow: C24-C47, C27-C35, C41-C62, C66-C77, and C78-C83.

The protein belongs to the three-finger toxin family. Ancestral subfamily. Boigatoxin sub-subfamily. Monomer. In terms of tissue distribution, expressed by the venom gland.

It is found in the secreted. Its function is as follows. Probable neurotoxin. Is not toxic to mice and geckos. In Spilotes sulphureus (Amazon puffing snake), this protein is Sulmotoxin 2.